The primary structure comprises 190 residues: B3 domain-containing protein At1g49475 (190 aa).

The tract at residues 1 to 27 is disordered; sequence MRNMHTNRRSPGPITSAATQRRLKPEP. A DNA-binding region (TF-B3) is located at residues 33–125; it reads KFIKIILLSR…CFRVVIFDVS (93 aa).

It is found in the nucleus. The sequence is that of B3 domain-containing protein At1g49475 from Arabidopsis thaliana (Mouse-ear cress).